Here is a 356-residue protein sequence, read N- to C-terminus: Glucan endo-1,3-beta-glucosidase, acidic isoform GL153 (356 aa).

The N-terminal stretch at 1–29 is a signal peptide; the sequence is MALCIKNGFLAAALVLVGLLMCSIQMIGA. Q30 carries the pyrrolidone carboxylic acid modification. N95 carries N-linked (GlcNAc...) asparagine glycosylation. Residue E124 is the Proton donor of the active site. E264 acts as the Nucleophile in catalysis.

Belongs to the glycosyl hydrolase 17 family. In terms of tissue distribution, is expressed primarily in epidermal cell of healthy plant, and following induction by ethylene, accumulates in mesophyll cells.

The protein localises to the secreted. Its subcellular location is the extracellular space. The catalysed reaction is Hydrolysis of (1-&gt;3)-beta-D-glucosidic linkages in (1-&gt;3)-beta-D-glucans.. Is thought to be an important plant defense-related product against fungal pathogens. The sequence is that of Glucan endo-1,3-beta-glucosidase, acidic isoform GL153 (GGL4) from Nicotiana tabacum (Common tobacco).